A 169-amino-acid chain; its full sequence is Disulfide bond formation protein B (169 aa).

The Cytoplasmic segment spans residues 1 to 14; it reads MNNLTLSLRRERRL. The chain crosses the membrane as a helical span at residues 15–31; it reads LVLLALVCLALLAGALY. Topologically, residues 32 to 49 are periplasmic; the sequence is LQYVKNEDPCPLCIIQRY. Cys41 and Cys44 are joined by a disulfide. A helical transmembrane segment spans residues 50-64; that stretch reads FFVLIAVFAFIGAGM. At 65–71 the chain is on the cytoplasmic side; sequence ASGAGVA. The chain crosses the membrane as a helical span at residues 72–89; that stretch reads VTEALIVLSAAAGVGTAA. The Periplasmic portion of the chain corresponds to 90–144; the sequence is RHLYVQLNPGFSCGFDALQPVVDSLPPARWLPGVFKVAGLCETVYPPIFGILLPG. An intrachain disulfide couples Cys102 to Cys130. The helical transmembrane segment at 145–163 threads the bilayer; sequence WALIAFVLIAVPVAVSLLR. Over 164 to 169 the chain is Cytoplasmic; the sequence is HRGRLR.

This sequence belongs to the DsbB family.

It localises to the cell inner membrane. Required for disulfide bond formation in some periplasmic proteins. Acts by oxidizing the DsbA protein. This is Disulfide bond formation protein B from Burkholderia mallei (strain ATCC 23344).